We begin with the raw amino-acid sequence, 413 residues long: Glutamate-1-semialdehyde 2,1-aminomutase (413 aa).

N6-(pyridoxal phosphate)lysine is present on K260.

This sequence belongs to the class-III pyridoxal-phosphate-dependent aminotransferase family. HemL subfamily. Pyridoxal 5'-phosphate serves as cofactor.

The protein resides in the cytoplasm. It carries out the reaction (S)-4-amino-5-oxopentanoate = 5-aminolevulinate. The protein operates within porphyrin-containing compound metabolism; protoporphyrin-IX biosynthesis; 5-aminolevulinate from L-glutamyl-tRNA(Glu): step 2/2. This Methanoregula boonei (strain DSM 21154 / JCM 14090 / 6A8) protein is Glutamate-1-semialdehyde 2,1-aminomutase.